A 764-amino-acid chain; its full sequence is Zinc finger CCCH domain-containing protein 24 (764 aa).

ANK repeat units follow at residues 108–138 and 143–175; these read EHRT…DVNR and DGTT…DADA. The C3H1-type zinc finger occupies 321 to 348; that stretch reads HYSCVPCPDFRKGVCRRGDMCEYAHGVF. Disordered regions lie at residues 616–665 and 698–732; these read QREK…DWGV and KESP…EGPS. Over residues 640-659 the composition is skewed to low complexity; the sequence is SGVVGSPLSSSWSKWGSPSG. Residues 705–716 show a composition bias toward polar residues; that stretch reads QVTTAESINSVG.

The polypeptide is Zinc finger CCCH domain-containing protein 24 (Oryza sativa subsp. japonica (Rice)).